Reading from the N-terminus, the 844-residue chain is Beta-mannosidase B (844 aa).

The Proton donor role is filled by E432.

It belongs to the glycosyl hydrolase 2 family. Beta-mannosidase B subfamily.

The catalysed reaction is Hydrolysis of terminal, non-reducing beta-D-mannose residues in beta-D-mannosides.. It functions in the pathway glycan metabolism; N-glycan degradation. Functionally, exoglycosidase that cleaves the single beta-linked mannose residue from the non-reducing end of beta-mannosidic oligosaccharides of various complexity and length. Prefers mannobiose over mannotriose and has no activity against polymeric mannan. Is also severely restricted by galactosyl substitutions at the +1 subsite. The sequence is that of Beta-mannosidase B (mndB) from Aspergillus oryzae (strain ATCC 42149 / RIB 40) (Yellow koji mold).